The chain runs to 1416 residues: Isonitrile lipopeptide synthase (1416 aa).

A coiled-coil region spans residues L188–Q215. Residues R965 to P1028 enclose the Carrier domain. The residue at position 988 (S988) is an O-(pantetheine 4'-phosphoryl)serine.

The protein belongs to the ATP-dependent AMP-binding enzyme family. Pantetheine 4'-phosphate serves as cofactor.

It catalyses the reaction 2 a (3R)-3-isocyanyl-fatty acyl-[ACP] + L-lysine + ATP + 2 NADPH = an isonitrile lipopeptide + 2 holo-[ACP] + AMP + diphosphate + 2 NADP(+). Nonribosomal peptide synthetase (NRPS) involved in the biosynthesis of a unique class of isonitrile lipopeptides (INLPs) that seem to play a role in metal acquisition in M.marinum. Catalyzes the final step in the pathway, i.e. the condensation of a (3R)-3-isocyanyl-fatty acyl-[ACP] to both amino groups of a lysine, producing isonitrile lipopeptides. This chain is Isonitrile lipopeptide synthase, found in Mycobacterium marinum (strain ATCC BAA-535 / M).